The sequence spans 255 residues: Pyridoxine 5'-phosphate synthase (255 aa).

Asparagine 12 contacts 3-amino-2-oxopropyl phosphate. Residue 14 to 15 (DH) coordinates 1-deoxy-D-xylulose 5-phosphate. A 3-amino-2-oxopropyl phosphate-binding site is contributed by arginine 23. Catalysis depends on histidine 48, which acts as the Proton acceptor. The 1-deoxy-D-xylulose 5-phosphate site is built by arginine 50 and histidine 55. The active-site Proton acceptor is glutamate 75. Threonine 105 contacts 1-deoxy-D-xylulose 5-phosphate. Histidine 199 functions as the Proton donor in the catalytic mechanism. Residues glycine 200 and 221–222 (GF) each bind 3-amino-2-oxopropyl phosphate.

It belongs to the PNP synthase family. As to quaternary structure, homooctamer; tetramer of dimers.

Its subcellular location is the cytoplasm. It carries out the reaction 3-amino-2-oxopropyl phosphate + 1-deoxy-D-xylulose 5-phosphate = pyridoxine 5'-phosphate + phosphate + 2 H2O + H(+). It functions in the pathway cofactor biosynthesis; pyridoxine 5'-phosphate biosynthesis; pyridoxine 5'-phosphate from D-erythrose 4-phosphate: step 5/5. Catalyzes the complicated ring closure reaction between the two acyclic compounds 1-deoxy-D-xylulose-5-phosphate (DXP) and 3-amino-2-oxopropyl phosphate (1-amino-acetone-3-phosphate or AAP) to form pyridoxine 5'-phosphate (PNP) and inorganic phosphate. The sequence is that of Pyridoxine 5'-phosphate synthase from Rhodopseudomonas palustris (strain BisB18).